A 55-amino-acid polypeptide reads, in one-letter code: Neurotoxin X-29S (55 aa).

An N-terminal signal peptide occupies residues 1 to 23 (MKIFFAVLVILVLFSMLIWTAYG). 3 cysteine pairs are disulfide-bonded: Cys-30–Cys-45, Cys-36–Cys-50, and Cys-39–Cys-53.

In terms of tissue distribution, expressed by the venom gland.

It is found in the secreted. This is Neurotoxin X-29S from Olivierus martensii (Manchurian scorpion).